A 1143-amino-acid chain; its full sequence is DNA-directed RNA polymerase subunit beta (1143 aa).

This sequence belongs to the RNA polymerase beta chain family. In terms of assembly, in plastids the minimal PEP RNA polymerase catalytic core is composed of four subunits: alpha, beta, beta', and beta''. When a (nuclear-encoded) sigma factor is associated with the core the holoenzyme is formed, which can initiate transcription.

The protein localises to the plastid. Its subcellular location is the chloroplast. The enzyme catalyses RNA(n) + a ribonucleoside 5'-triphosphate = RNA(n+1) + diphosphate. In terms of biological role, DNA-dependent RNA polymerase catalyzes the transcription of DNA into RNA using the four ribonucleoside triphosphates as substrates. The sequence is that of DNA-directed RNA polymerase subunit beta from Pyropia yezoensis (Susabi-nori).